The chain runs to 630 residues: MSSEDQFTSIQWDRDDGENTNNTPTDTTIKSKSSKSKKSKKSSSKKKNGNKISPSSTTETSDADDTMKEVTDQLESTQINDDNHEVDDGNKEQNVDANQIGNSDEDPTNSLLLPVNPQPKEPQEEKEDLQQQLQQPQQQLASIQQEPAPIQPPFNAVVNDESLSIQQQQQQQQPTGYVDISYYEKYSIKTTVTHPNRDLDTASKPFISYLVTTTTDNPSILKLTKEKKPKQGEEYLTFSVRRRYGDFRYLYESLSNDFPTVMIPPLPSKSNFKYLTGDTFSSEFVHKRLHSLDRFIRFILQHKILSQSSIFHLFISNSNDWATFTTSLKLKDSSSDESGIVGRVVNEDLITETVMNFLTPSKHKKETNKDILEINDKLKKLYENLIKLDKIFTKLKKKNHELGNDYDQFSNQILKLSSVQKGEDSIMTTNFKIFSDSLNYFSKSYNEMYRYIDENFLISLQDLAKFCLRFIQLIKLKNDKSTDLAVLQDFLNKELANNSGGSGSGSGSGGSGLHQPPNPVISSYQGGIVNNTTQLIKDTLSTSNTTISNTIKSDKIKNLEQEIAKETKILTDLTNKIINEEYPNWEKFNKIEIKNSMLGLCDQNIKFYNDLLEKFGEVEMKLIKRLDEDM.

2 stretches are compositionally biased toward polar residues: residues 1–11 (MSSEDQFTSIQ) and 19–28 (NTNNTPTDTT). A disordered region spans residues 1 to 143 (MSSEDQFTSI…QQPQQQLASI (143 aa)). Over residues 32-49 (KSSKSKKSKKSSSKKKNG) the composition is skewed to basic residues. Low complexity predominate over residues 50–60 (NKISPSSTTET). A compositionally biased stretch (basic and acidic residues) spans 81–94 (DDNHEVDDGNKEQN). Low complexity predominate over residues 130–143 (QQQLQQPQQQLASI). Residues 187–321 (SIKTTVTHPN…HLFISNSNDW (135 aa)) form the PX domain. The a 1,2-diacyl-sn-glycero-3-phospho-(1D-myo-inositol-3-phosphate) site is built by Arg-243, Lys-269, and Arg-288. Coiled-coil stretches lie at residues 361–413 (SKHK…SNQI) and 550–581 (TIKS…INEE).

The protein belongs to the sorting nexin family.

It localises to the cytoplasm. It is found in the cytosol. The protein localises to the preautophagosomal structure membrane. Its subcellular location is the endosome membrane. Functionally, sorting nexin, involved in the separation or division of vacuoles throughout the entire life cycle of the cells. Involved in retrieval of late-Golgi SNAREs from post-Golgi endosomes to the trans-Golgi network, for cytoplasm to vacuole transport (Cvt), and autophagy of large cargos including mitophagy, pexophagy and glycophagy. The chain is Sorting nexin-4 (SNX4) from Candida albicans (strain SC5314 / ATCC MYA-2876) (Yeast).